Consider the following 289-residue polypeptide: Pantothenate synthetase (289 aa).

30–37 (MGYLHEGH) is an ATP binding site. His-37 functions as the Proton donor in the catalytic mechanism. Residue Gln-61 coordinates (R)-pantoate. Gln-61 contributes to the beta-alanine binding site. 147–150 (GLKD) is an ATP binding site. Gln-153 contacts (R)-pantoate. Residues Val-176 and 184–187 (KSSR) contribute to the ATP site.

This sequence belongs to the pantothenate synthetase family. Homodimer.

Its subcellular location is the cytoplasm. It catalyses the reaction (R)-pantoate + beta-alanine + ATP = (R)-pantothenate + AMP + diphosphate + H(+). Its pathway is cofactor biosynthesis; (R)-pantothenate biosynthesis; (R)-pantothenate from (R)-pantoate and beta-alanine: step 1/1. Functionally, catalyzes the condensation of pantoate with beta-alanine in an ATP-dependent reaction via a pantoyl-adenylate intermediate. This is Pantothenate synthetase from Geobacillus thermodenitrificans (strain NG80-2).